A 394-amino-acid chain; its full sequence is uncharacterized protein (394 aa).

12 consecutive transmembrane segments (helical) span residues 13–35 (AIIG…VPVL), 50–72 (VGVA…GWLS), 79–97 (LIIN…IAWS), 107–129 (GRGL…ELVL), 136–158 (IMGL…SPII), 168–190 (FLIN…PASL), 218–240 (INLS…PVEL), 250–272 (VPEI…CICF), 277–299 (VLYS…GIFL), 309–331 (ILGL…ALVN), 344–366 (AIYS…ILFS), and 371–393 (FEVL…LYLI).

It belongs to the major facilitator superfamily.

Its subcellular location is the cell membrane. This is an uncharacterized protein from Buchnera aphidicola subsp. Baizongia pistaciae (strain Bp).